Reading from the N-terminus, the 96-residue chain is Large ribosomal subunit protein eL14 (96 aa).

It belongs to the eukaryotic ribosomal protein eL14 family.

This Sulfolobus acidocaldarius (strain ATCC 33909 / DSM 639 / JCM 8929 / NBRC 15157 / NCIMB 11770) protein is Large ribosomal subunit protein eL14.